A 283-amino-acid chain; its full sequence is Fructose-1,6-bisphosphatase class 1 (283 aa).

The Mg(2+) site is built by E67, D86, L88, and D89. Residues 89-92 (DGSS), Y195, and K225 each bind substrate. Residue E231 participates in Mg(2+) binding.

This sequence belongs to the FBPase class 1 family. Homotetramer. The cofactor is Mg(2+).

The protein localises to the cytoplasm. The enzyme catalyses beta-D-fructose 1,6-bisphosphate + H2O = beta-D-fructose 6-phosphate + phosphate. Its pathway is carbohydrate biosynthesis; gluconeogenesis. The sequence is that of Fructose-1,6-bisphosphatase class 1 from Natronomonas pharaonis (strain ATCC 35678 / DSM 2160 / CIP 103997 / JCM 8858 / NBRC 14720 / NCIMB 2260 / Gabara) (Halobacterium pharaonis).